The sequence spans 455 residues: tRNA modification GTPase MnmE (455 aa).

Residues Arg-24, Glu-81, and Lys-120 each contribute to the (6S)-5-formyl-5,6,7,8-tetrahydrofolate site. One can recognise a TrmE-type G domain in the interval Gly-216–Gly-378. Position 226 (Asn-226) interacts with K(+). Residues Asn-226–Ser-231, Thr-245–Thr-251, Asp-270–Gly-273, Asn-335–Asp-338, and Ser-359–Arg-361 contribute to the GTP site. Position 230 (Ser-230) interacts with Mg(2+). The K(+) site is built by Thr-245, Ile-247, and Thr-250. Thr-251 provides a ligand contact to Mg(2+). Residue Lys-455 coordinates (6S)-5-formyl-5,6,7,8-tetrahydrofolate.

Belongs to the TRAFAC class TrmE-Era-EngA-EngB-Septin-like GTPase superfamily. TrmE GTPase family. Homodimer. Heterotetramer of two MnmE and two MnmG subunits. The cofactor is K(+).

The protein resides in the cytoplasm. Functionally, exhibits a very high intrinsic GTPase hydrolysis rate. Involved in the addition of a carboxymethylaminomethyl (cmnm) group at the wobble position (U34) of certain tRNAs, forming tRNA-cmnm(5)s(2)U34. The sequence is that of tRNA modification GTPase MnmE from Pseudomonas aeruginosa (strain ATCC 15692 / DSM 22644 / CIP 104116 / JCM 14847 / LMG 12228 / 1C / PRS 101 / PAO1).